Here is a 60-residue protein sequence, read N- to C-terminus: Temporin-MT5 (60 aa).

An N-terminal signal peptide occupies residues 1 to 22 (MFTLKKPLLLLFFLATINLSLC). The propeptide at 23 to 44 (EQERNAEEERRDEPDERNAEVE) is removed in mature form. The residue at position 58 (Phe-58) is a Phenylalanine amide.

This sequence belongs to the frog skin active peptide (FSAP) family. Temporin subfamily. As to expression, expressed by the skin glands.

It is found in the secreted. Functionally, antimicrobial peptide. This Amolops mantzorum (Sichuan torrent frog) protein is Temporin-MT5.